A 337-amino-acid polypeptide reads, in one-letter code: Vacuolar protein sorting-associated protein 26B (337 aa).

The interval 311 to 337 is disordered; the sequence is SQRFEGTSHPETRPQHSGAAAVEQEQE.

Belongs to the VPS26 family. Component of the heterotrimeric retromer cargo-selective complex (CSC) which is believed to associate with variable sorting nexins to form functionally distinct retromer complex variants.

The protein localises to the cytoplasm. It is found in the membrane. It localises to the endosome. Acts as a component of the retromer cargo-selective complex (CSC). The CSC is believed to be the core functional component of retromer or respective retromer complex variants acting to prevent missorting of selected transmembrane cargo proteins into the lysosomal degradation pathway. Retromer mediates retrograde transport of cargo proteins from endosomes to the trans-Golgi network (TGN). This is Vacuolar protein sorting-associated protein 26B (vps26b) from Xenopus tropicalis (Western clawed frog).